Here is a 132-residue protein sequence, read N- to C-terminus: Agouti-signaling protein (132 aa).

The signal sequence occupies residues 1–22 (MDVTRLLLATLLVFLCFFTANS). The N-linked (GlcNAc...) asparagine glycan is linked to Asn-39. Positions 62 to 85 (IGRKAAEKKRSSKKEASMKKVVRP) are disordered. Residues 65–79 (KAAEKKRSSKKEASM) are compositionally biased toward basic and acidic residues. Intrachain disulfides connect Cys-93–Cys-108, Cys-100–Cys-114, Cys-107–Cys-125, Cys-111–Cys-132, and Cys-116–Cys-123. The Agouti domain occupies 93 to 132 (CVATRNSCKPPAPACCDPCASCQCRFFRSACSCRVLSLNC).

In terms of tissue distribution, widely expressed at low levels. Highly expressed in the skin. Expressed in adipose tissue.

It is found in the secreted. In terms of biological role, involved in the regulation of melanogenesis. The binding of ASP to MC1R precludes alpha-MSH initiated signaling and thus blocks production of cAMP, leading to a down-regulation of eumelanogenesis (brown/black pigment) and thus increasing synthesis of pheomelanin (yellow/red pigment). In higher primates, agouti may affect the quality of hair pigmentation rather than its pattern of deposition. Could well play a role in neuroendocrine aspects of melanocortin action. May have some functional role in regulating the lipid metabolism with adipocytes. The sequence is that of Agouti-signaling protein (ASIP) from Homo sapiens (Human).